The following is a 1062-amino-acid chain: Probable sucrose-phosphate synthase 3 (1062 aa).

Over residues 113-122 the composition is skewed to basic and acidic residues; sequence EREQGRRDAT. The interval 113-141 is disordered; it reads EREQGRRDATEDLSEDLSEGEKGDGLGEI. A phosphoserine mark is found at Ser126, Ser130, and Ser156. The segment at 715 to 735 is disordered; sequence MDGDKPSLNGSLEPNSADPVK.

The protein belongs to the glycosyltransferase 1 family. Homodimer or homotetramer.

The catalysed reaction is beta-D-fructose 6-phosphate + UDP-alpha-D-glucose = sucrose 6(F)-phosphate + UDP + H(+). Its pathway is glycan biosynthesis; sucrose biosynthesis; sucrose from D-fructose 6-phosphate and UDP-alpha-D-glucose: step 1/2. Its activity is regulated as follows. Activity is regulated by phosphorylation and moderated by concentration of metabolites and light. Its function is as follows. Plays a role in photosynthetic sucrose synthesis by catalyzing the rate-limiting step of sucrose biosynthesis from UDP-glucose and fructose- 6-phosphate. Involved in the regulation of carbon partitioning in the leaves of plants. May regulate the synthesis of sucrose and therefore play a major role as a limiting factor in the export of photoassimilates out of the leaf. Plays a role for sucrose availability that is essential for plant growth and fiber elongation. The polypeptide is Probable sucrose-phosphate synthase 3 (SPS3) (Arabidopsis thaliana (Mouse-ear cress)).